The chain runs to 688 residues: DNA-directed RNA polymerase subunit beta' (688 aa).

Residues C69, C71, C87, and C90 each coordinate Zn(2+). Positions 489, 491, and 493 each coordinate Mg(2+).

This sequence belongs to the RNA polymerase beta' chain family. RpoC1 subfamily. In plastids the minimal PEP RNA polymerase catalytic core is composed of four subunits: alpha, beta, beta', and beta''. When a (nuclear-encoded) sigma factor is associated with the core the holoenzyme is formed, which can initiate transcription. Mg(2+) serves as cofactor. Requires Zn(2+) as cofactor.

Its subcellular location is the plastid. The protein resides in the chloroplast. The catalysed reaction is RNA(n) + a ribonucleoside 5'-triphosphate = RNA(n+1) + diphosphate. In terms of biological role, DNA-dependent RNA polymerase catalyzes the transcription of DNA into RNA using the four ribonucleoside triphosphates as substrates. The polypeptide is DNA-directed RNA polymerase subunit beta' (Piper cenocladum (Ant piper)).